The chain runs to 556 residues: Solute carrier family 22 member 1 (556 aa).

Residues 1-21 (MPTVDDVLEQVGEFGWFQKQA) lie on the Cytoplasmic side of the membrane. Residues 22 to 42 (FLLLCLISASLAPIYVGIVFL) traverse the membrane as a helical segment. Topologically, residues 43–150 (GFTPGHYCQN…LVCGDAWKVD (108 aa)) are extracellular. N-linked (GlcNAc...) asparagine glycosylation is present at Asn71. A helical transmembrane segment spans residues 151–171 (LFQSCVNLGFFLGSLVVGYIA). At 172-177 (DRFGRK) the chain is on the cytoplasmic side. Residues 178 to 198 (LCLLVTTLVTSVSGVLTAVAP) form a helical membrane-spanning segment. Over 199–211 (DYTSMLLFRLLQG) the chain is Extracellular. The chain crosses the membrane as a helical span at residues 212–231 (MVSKGSWVSGYTLITEFVGS). At 232 to 238 (GYRRTTA) the chain is on the cytoplasmic side. Residues 239–259 (ILYQMAFTVGLVGLAGVAYAI) traverse the membrane as a helical segment. Residues 260-263 (PDWR) lie on the Extracellular side of the membrane. Residues 264-284 (WLQLAVSLPTFLFLLYYWFVP) form a helical membrane-spanning segment. The Proline-rich sequence motif lies at 284 to 288 (PESPR). Residues 285-348 (ESPRWLLSQK…FRTPNLRKHT (64 aa)) lie on the Cytoplasmic side of the membrane. Ser334 is modified (phosphoserine). A helical membrane pass occupies residues 349 to 369 (VILMYLWFSCAVLYQGLIMHV). Residues 370 to 377 (GATGANLY) are Extracellular-facing. A helical membrane pass occupies residues 378 to 398 (LDFFYSSLVEFPAAFIILVTI). Over 399–403 (DRIGR) the chain is Cytoplasmic. The chain crosses the membrane as a helical span at residues 404–424 (IYPIAASNLVTGAACLLMIFI). The Extracellular portion of the chain corresponds to 425–429 (PHELH). A helical membrane pass occupies residues 430-452 (WLNVTLACLGRMGATIVLQMVCL). Topologically, residues 453 to 465 (VNAELYPTFIRNL) are cytoplasmic. Residues 466 to 486 (GMMVCSALCDLGGIFTPFMVF) form a helical membrane-spanning segment. Residues 487-493 (RLMEVWQ) lie on the Extracellular side of the membrane. The chain crosses the membrane as a helical span at residues 494–514 (ALPLILFGVLGLTAGAMTLLL). Topologically, residues 515–556 (PETKGVALPETIEEAENLGRRKSKAKENTIYLQVQTGKSSST) are cytoplasmic. The residue at position 543 (Thr543) is a Phosphothreonine.

It belongs to the major facilitator (TC 2.A.1) superfamily. Organic cation transporter (TC 2.A.1.19) family. In terms of processing, phosphorylated. Expressed in kidney cortex in S1, S2 segments of renal proximal tubules as well as in kidney medulla. Expressed throughout the liver lobuli, in hepatocytes surrounding the central veins. Expressed in enterocytes of villi and crypts in small intestine. Expressed in brain, in some white matter regions like the corpus callosum and in the granular layer of the cerebellum. Expressed in Sertoli cells in testis. Expressed in colon. Expressed in tracheal and bronchial ciliated epithelium in the respiratory tract. Expressed in spleen, moderately in skin, and weakly in the gastrointestinal tract, lung, thymus, muscle, and prostate. As to expression, expressed in kidney cortex and medulla. Expressed in intestine, liver and colon.

Its subcellular location is the basolateral cell membrane. It is found in the apical cell membrane. The protein resides in the lateral cell membrane. It localises to the basal cell membrane. The protein localises to the cell membrane. The catalysed reaction is 1-methylnicotinamide(out) = 1-methylnicotinamide(in). It carries out the reaction dopamine(out) = dopamine(in). It catalyses the reaction serotonin(out) = serotonin(in). The enzyme catalyses (R)-adrenaline(out) = (R)-adrenaline(in). The catalysed reaction is (R)-noradrenaline(out) = (R)-noradrenaline(in). It carries out the reaction histamine(out) = histamine(in). It catalyses the reaction guanidine(out) = guanidine(in). The enzyme catalyses choline(out) = choline(in). The catalysed reaction is acetylcholine(in) = acetylcholine(out). It carries out the reaction thiamine(in) = thiamine(out). It catalyses the reaction agmatine(out) = agmatine(in). The enzyme catalyses putrescine(out) = putrescine(in). The catalysed reaction is spermidine(in) = spermidine(out). It carries out the reaction (R)-carnitine(in) = (R)-carnitine(out). It catalyses the reaction O-isobutanoyl-(R)-carnitine(in) = O-isobutanoyl-(R)-carnitine(out). The enzyme catalyses O-acetyl-(R)-carnitine(in) = O-acetyl-(R)-carnitine(out). The catalysed reaction is O-3-hydroxybutanoyl-(R)-carnitine(in) = O-3-hydroxybutanoyl-(R)-carnitine(out). It carries out the reaction O-propanoyl-(R)-carnitine(in) = O-propanoyl-(R)-carnitine(out). It catalyses the reaction O-butanoyl-(R)-carnitine(in) = O-butanoyl-(R)-carnitine(out). The enzyme catalyses O-2-methylbutanoyl-(R)-carnitine(in) = O-2-methylbutanoyl-(R)-carnitine(out). The catalysed reaction is O-3-methylbutanoyl-(R)-carnitine(in) = O-3-methylbutanoyl-(R)-carnitine(out). It carries out the reaction O-hexanoyl-(R)-carnitine(in) = O-hexanoyl-(R)-carnitine(out). It catalyses the reaction L-histidyl-L-proline diketopiperazine(in) = L-histidyl-L-proline diketopiperazine(out). The enzyme catalyses (R)-salsolinol(in) = (R)-salsolinol(out). The catalysed reaction is prostaglandin F2alpha(out) = prostaglandin F2alpha(in). It carries out the reaction prostaglandin E2(out) = prostaglandin E2(in). Phosphorylation of the transporter leads to changes in its substrate affinity, resulting in a regulation of the transport activity. In contrast with human ortholog, ASP uptake is stimulated by protein kinase A (PKA) and C (PKC) and endogenous tyrosine kinase activation. ASP affinity is induced by PKC-dependent phosphorylation. Inhibited by cGMP, most likely through a cGMP-binding protein that interacts with OCT1. Its function is as follows. Electrogenic voltage-dependent transporter that mediates the transport of a variety of organic cations such as endogenous bioactive amines, cationic drugs and xenobiotics. Functions as a pH- and Na(+)-independent, bidirectional transporter. Cation cellular uptake or release is driven by the electrochemical potential (i.e. membrane potential and concentration gradient) and substrate selectivity. Hydrophobicity is a major requirement for recognition in polyvalent substrates and inhibitors. Primarily expressed in the basolateral membrane of hepatocytes and proximal tubules and involved in the uptake and disposition of cationic compounds from the blood by hepatic and renal clearance. Most likely functions as an uptake carrier in enterocytes contributing to the intestinal excretion and elimination of organic cations from the systemic circulation. Transports endogenous monoamines such as N-1-methylnicotinamide (NMN), guanidine, neurotransmitters dopamine, serotonin, noradrenaline, adrenaline and histamine, and quaternary ammonium compound such as choline. Also transports natural polyamines such as spermidine, agmatine and putrescine at low affinity, but relatively high turnover. Involved in the hepatic uptake of vitamin B1/thiamine, hence regulating hepatic lipid and energy metabolism. Contributes to the influx and efflux of fatty acid carriers carnitines and acylcarnitines across the basolateral membrane of hepatocytes, from the liver to the systemic circulation and inversely and may be involved in regulating the systemic availability of hepatic acylcarnitines. Mediates the bidirectional transport of acetylcholine (ACh) at the apical membrane of ciliated cell in airway epithelium, thereby playing a role in luminal release of ACh from bronchial epithelium. Transports dopaminergic neuromodulators cyclo(his-pro) and salsolinol with lower efficency. Also capable of transporting non-amine endogenous compounds such as prostaglandin E2 (PGE2) and prostaglandin F2-alpha (PGF2-alpha). May contribute to the transport of cationic compounds in testis across the blood-testis-barrier. Also mediates the uptake of xenobiotics tributylmethylammonium (TBuMA), quinidine, N-methyl-quinine (NMQ), N-methyl-quinidine (NMQD) N-(4,4-azo-n-pentyl)-quinuclidine (APQ), azidoprocainamide methoiodide (AMP), N-(4,4-azo-n-pentyl)-21-deoxyajmalinium (APDA) and 4-(4-(dimethylamino)styryl)-N-methylpyridinium (ASP). Functional isoform capable of transporting TEA. This Rattus norvegicus (Rat) protein is Solute carrier family 22 member 1.